A 181-amino-acid polypeptide reads, in one-letter code: Protein GrpE (181 aa).

A disordered region spans residues 1-21 (MNKEQQDLQTEQEAAVETAEL). Over residues 8–21 (LQTEQEAAVETAEL) the composition is skewed to low complexity.

It belongs to the GrpE family. As to quaternary structure, homodimer.

It localises to the cytoplasm. Participates actively in the response to hyperosmotic and heat shock by preventing the aggregation of stress-denatured proteins, in association with DnaK and GrpE. It is the nucleotide exchange factor for DnaK and may function as a thermosensor. Unfolded proteins bind initially to DnaJ; upon interaction with the DnaJ-bound protein, DnaK hydrolyzes its bound ATP, resulting in the formation of a stable complex. GrpE releases ADP from DnaK; ATP binding to DnaK triggers the release of the substrate protein, thus completing the reaction cycle. Several rounds of ATP-dependent interactions between DnaJ, DnaK and GrpE are required for fully efficient folding. The protein is Protein GrpE of Trichlorobacter lovleyi (strain ATCC BAA-1151 / DSM 17278 / SZ) (Geobacter lovleyi).